The primary structure comprises 259 residues: Binding partner of ACD11 1 (259 aa).

The RRM domain occupies 6–77 (RSVKVGNLSS…QSVIIELAPN (72 aa)). The interval 219–259 (GEVGQKTKEKVEAEQPSQPAQSQQQLPEGYSPIHSSEYSKN) is disordered. The segment covering 232 to 243 (EQPSQPAQSQQQ) has biased composition (low complexity).

Interacts with ACD11, PR1F2 and PR1F3.

The protein localises to the cytoplasm. The protein resides in the membrane. The polypeptide is Binding partner of ACD11 1 (BPA1) (Arabidopsis thaliana (Mouse-ear cress)).